Here is a 366-residue protein sequence, read N- to C-terminus: Leucine-rich repeat-containing protein 58 (366 aa).

Residue S19 is modified to Phosphoserine. LRR repeat units follow at residues 40–61, 64–86, 87–108, 116–138, 139–161, 162–184, 185–206, 208–229, and 231–251; these read ALLR…LGGG, HLQL…LTLS, GLRT…PKGL, SLQV…LELR, ALQT…ENLR, SLEC…ANLP, SLNY…LSQL, SLRS…ILNL, and HLEE…RDLT. Residues 337–346 show a composition bias toward low complexity; it reads ASHSSTSQSE. The tract at residues 337–356 is disordered; the sequence is ASHSSTSQSESDSEDEASVA.

In Mus musculus (Mouse), this protein is Leucine-rich repeat-containing protein 58 (Lrrc58).